The chain runs to 209 residues: Guanylate kinase (209 aa).

The 180-residue stretch at 10–189 folds into the Guanylate kinase-like domain; that stretch reads GLLLVLSAPS…AFSDLRSVVV (180 aa). 17-24 provides a ligand contact to ATP; sequence APSGAGKT.

It belongs to the guanylate kinase family.

It localises to the cytoplasm. The catalysed reaction is GMP + ATP = GDP + ADP. Essential for recycling GMP and indirectly, cGMP. This Myxococcus xanthus (strain DK1622) protein is Guanylate kinase.